The primary structure comprises 425 residues: Tol-Pal system protein TolB (425 aa).

The N-terminal stretch at 1 to 22 (MRNFLYCTGVLLLLWMSTSSQA) is a signal peptide.

The protein belongs to the TolB family. In terms of assembly, the Tol-Pal system is composed of five core proteins: the inner membrane proteins TolA, TolQ and TolR, the periplasmic protein TolB and the outer membrane protein Pal. They form a network linking the inner and outer membranes and the peptidoglycan layer.

The protein resides in the periplasm. Functionally, part of the Tol-Pal system, which plays a role in outer membrane invagination during cell division and is important for maintaining outer membrane integrity. The chain is Tol-Pal system protein TolB from Nitrosomonas europaea (strain ATCC 19718 / CIP 103999 / KCTC 2705 / NBRC 14298).